The primary structure comprises 444 residues: Methylenetetrahydrofolate--tRNA-(uracil-5-)-methyltransferase TrmFO (444 aa).

9 to 14 (GAGLAG) contacts FAD.

This sequence belongs to the MnmG family. TrmFO subfamily. Requires FAD as cofactor.

It is found in the cytoplasm. It catalyses the reaction uridine(54) in tRNA + (6R)-5,10-methylene-5,6,7,8-tetrahydrofolate + NADH + H(+) = 5-methyluridine(54) in tRNA + (6S)-5,6,7,8-tetrahydrofolate + NAD(+). It carries out the reaction uridine(54) in tRNA + (6R)-5,10-methylene-5,6,7,8-tetrahydrofolate + NADPH + H(+) = 5-methyluridine(54) in tRNA + (6S)-5,6,7,8-tetrahydrofolate + NADP(+). Functionally, catalyzes the folate-dependent formation of 5-methyl-uridine at position 54 (M-5-U54) in all tRNAs. The protein is Methylenetetrahydrofolate--tRNA-(uracil-5-)-methyltransferase TrmFO of Koribacter versatilis (strain Ellin345).